Reading from the N-terminus, the 83-residue chain is Exodeoxyribonuclease 7 small subunit (83 aa).

Belongs to the XseB family. As to quaternary structure, heterooligomer composed of large and small subunits.

The protein localises to the cytoplasm. It catalyses the reaction Exonucleolytic cleavage in either 5'- to 3'- or 3'- to 5'-direction to yield nucleoside 5'-phosphates.. Its function is as follows. Bidirectionally degrades single-stranded DNA into large acid-insoluble oligonucleotides, which are then degraded further into small acid-soluble oligonucleotides. This Bradyrhizobium sp. (strain BTAi1 / ATCC BAA-1182) protein is Exodeoxyribonuclease 7 small subunit.